The chain runs to 402 residues: Phosphoglycerate kinase (402 aa).

Substrate-binding positions include 29 to 31, arginine 45, 69 to 72, arginine 125, and arginine 158; these read DFN and HLGR. ATP contacts are provided by residues lysine 209, glutamate 331, and 357–360; that span reads GGDT.

The protein belongs to the phosphoglycerate kinase family.

Its subcellular location is the cytoplasm. The enzyme catalyses (2R)-3-phosphoglycerate + ATP = (2R)-3-phospho-glyceroyl phosphate + ADP. Its pathway is carbohydrate degradation; glycolysis; pyruvate from D-glyceraldehyde 3-phosphate: step 2/5. This is Phosphoglycerate kinase (pgk) from Helicobacter pylori (strain ATCC 700392 / 26695) (Campylobacter pylori).